We begin with the raw amino-acid sequence, 398 residues long: Odorant receptor 59b (398 aa).

The Cytoplasmic segment spans residues 1-46 (MAVFKLIKPAPLTEKVQSRQGNIYLYRAMWLIGWIPPKEGVLRYVY). The helical transmembrane segment at 47–67 (LFWTCVPFAFGVFYLPVGFII) threads the bilayer. The Extracellular segment spans residues 68 to 84 (SYVQEFKNFTPGEFLTS). Residues 85–105 (LQVCINVYGASVKSTITYLFL) form a helical membrane-spanning segment. Topologically, residues 106–141 (WRLRKTEILLDSLDKRLANDSDRERIHNMVARCNYA) are cytoplasmic. A helical membrane pass occupies residues 142 to 162 (FLIYSFIYCGYAGSTFLSYAL). Residues 163–179 (SGRPPWSVYNPFIDWRD) lie on the Extracellular side of the membrane. The helical transmembrane segment at 180-200 (GMGSLWIQAIFEYITMSFAVL) threads the bilayer. Topologically, residues 201 to 269 (QDQLSDTYPL…DMIRPMISRT (69 aa)) are cytoplasmic. A helical transmembrane segment spans residues 270-290 (IFVQFALIGSVLGLTLVNVFF). Over 291–293 (FSN) the chain is Extracellular. The helical transmembrane segment at 294–314 (FWKGVASLLFVITILLQTFPF) threads the bilayer. Residues 315-348 (CYTCNMLIDDAQDLSNEIFQSNWVDAEPRYKATL) are Cytoplasmic-facing. Residues 349–369 (VLFMHHVQQPIIFIAGGIFPI) form a helical membrane-spanning segment. At 370 to 398 (SMNSNITVAKFAFSIITIVRQMNLAEQFQ) the chain is on the extracellular side. Residue Asn-374 is glycosylated (N-linked (GlcNAc...) asparagine).

The protein belongs to the insect chemoreceptor superfamily. Heteromeric odorant receptor channel (TC 1.A.69) family. Or2a subfamily. In terms of assembly, interacts with Orco. Complexes exist early in the endomembrane system in olfactory sensory neurons (OSNs), coupling these complexes to the conserved ciliary trafficking pathway. In terms of tissue distribution, expressed in olfactory sensory neurons in the antenna.

It is found in the cell membrane. Functionally, odorant receptor which mediates acceptance or avoidance behavior, depending on its substrates. The odorant receptor repertoire encodes a large collection of odor stimuli that vary widely in identity, intensity, and duration. Forms a complex with Orco to form odorant-sensing units, providing sensitive and prolonged odorant signaling and calcium permeability. Also plays a role in the response to N,N-Diethyl-meta-toluamide (DEET), the most widely used insect repellent worldwide. The polypeptide is Odorant receptor 59b (Or59b) (Drosophila melanogaster (Fruit fly)).